The following is a 525-amino-acid chain: Serine/threonine protein phosphatase 2A 55 kDa regulatory subunit B beta isoform (525 aa).

Positions 1-31 (MDPFSKSPDDDDLRPEAEAARRPQPQPQPRE) are disordered. WD repeat units lie at residues 48–87 (QEVD…DSAS) and 124–165 (EIEE…VKRI). The segment at 169-191 (NLNTSQSSGNGTTSSSSSSSSRA) is disordered. Positions 171-189 (NTSQSSGNGTTSSSSSSSS) are enriched in low complexity. WD repeat units follow at residues 244 to 282 (AHDY…QSFN), 293 to 333 (DLTE…LCDN), 352 to 390 (EIIA…GPVA), and 495 to 525 (DLST…MYYA).

This sequence belongs to the phosphatase 2A regulatory subunit B family. In terms of assembly, PP2A consists of a common heteromeric enzyme, composed of a catalytic subunit (subunits C), a constant regulatory subunit (subunit A), and a variety of regulatory subunits such as subunits B (the R2/B/PR55/B55, R3/B''/PR72/PR130/PR59 and R5/B'/B56 families).

In terms of biological role, the B regulatory subunit may modulate substrate selectivity and catalytic activity, and may also direct the localization of the catalytic enzyme to a particular subcellular compartment. This is Serine/threonine protein phosphatase 2A 55 kDa regulatory subunit B beta isoform from Oryza sativa subsp. indica (Rice).